A 230-amino-acid chain; its full sequence is Large ribosomal subunit protein uL1 (230 aa).

Belongs to the universal ribosomal protein uL1 family. In terms of assembly, part of the 50S ribosomal subunit.

In terms of biological role, binds directly to 23S rRNA. The L1 stalk is quite mobile in the ribosome, and is involved in E site tRNA release. Its function is as follows. Protein L1 is also a translational repressor protein, it controls the translation of the L11 operon by binding to its mRNA. In Nitrobacter hamburgensis (strain DSM 10229 / NCIMB 13809 / X14), this protein is Large ribosomal subunit protein uL1.